Reading from the N-terminus, the 930-residue chain is MLKLLLGDPNARKLKKYQPYITEINLLEEDIKVLSDEDLKGKTAEFKQRLAKGETLDDILPEAFAVVREAGRRVLGLRHFDVQMLGGVILHSGQIAEMKTGEGKTLVATLPSYLNALTGKGVHVITVNDYLARRDAEWMGQVHRFLGLSVGLIQSSMTPSERQKNYECDITYVTNSEVGFDYLRDNMATSMADVVQRPFNYCVIDEVDSILVDEARTPLIISGQVERPTEKYVQAAEIALTLQKDEHYEVDEKARNVLLTDEGFAQAEELLGVTDLFDPEDPWAHFVFNAIKAKELFLKDVNYIVRNGEVVIVDEFTGRVLPGRRWSDGLHQAIEAKEHVDIQPETQTLATITYQNLFLLYPKLGGMTGTAKTEEAEFERIYKLEVTIIPTNRIRRREDLSDLVFKKEIGKWQAIARECAEMHELGRPVLVGTTSVEKSEYLSQLLREQGIPHELLNARPENVEREAEIVAQAGRRGAVTIATNMAGRGTDIILGGNSEYMARLKLREYFMPRIVRPDDEDVFGVQRAAGLPTGHGAGQGFVPGKKVKTWKASPEIFPTQLSKEAEQLLKEAVDFAVREYGDRSLPELEAEDKVAVAAEKAPTNDPVIQKLRDAYKRIKQEYEEFTSTEHDEVVSRGGLHVIGTERHESRRIDNQLRGRAGRQGDPGSTRFFLSLEDNLLRIFGGDRVAGLMEAFNVEDDMPIESGMLTRSLEGAQRKVETYYYDIRKQVFEYDEVMNNQRRAIYAERRRVLEGQDLKEQVIKYAEKTMDEIVDYYINVDLPSEEWELDKLVDKVKEFVYLLSDMQASQLEDMGVSEIKAFLHEQVRIAYDLKEAQIDQIQPGLMRQAERFFILQRIDTLWREHLQQMDALRESVGLRGYGQKDPLIEYKSEGYELFLDMMVNIRRDVVYSLFMFQPQPQPVVQTSSEMV.

Residues glutamine 83, 101–105 (GEGKT), and aspartate 491 contribute to the ATP site.

This sequence belongs to the SecA family. Monomer and homodimer. Part of the essential Sec protein translocation apparatus which comprises SecA, SecYEG and auxiliary proteins SecDF. Other proteins may also be involved.

It is found in the cell inner membrane. The protein resides in the cellular thylakoid membrane. Its subcellular location is the cytoplasm. It carries out the reaction ATP + H2O + cellular proteinSide 1 = ADP + phosphate + cellular proteinSide 2.. In terms of biological role, part of the Sec protein translocase complex. Interacts with the SecYEG preprotein conducting channel. Has a central role in coupling the hydrolysis of ATP to the transfer of proteins into and across the cell membrane, serving as an ATP-driven molecular motor driving the stepwise translocation of polypeptide chains across the membrane. Functionally, probably participates in protein translocation into and across both the cytoplasmic and thylakoid membranes in cyanobacterial cells. This chain is Protein translocase subunit SecA, found in Trichormus variabilis (strain ATCC 29413 / PCC 7937) (Anabaena variabilis).